The primary structure comprises 85 residues: U4-theraphotoxin-Hhn1e (85 aa).

The first 22 residues, 1–22 (MKVTLIAILTCAAVLVLHTTAA), serve as a signal peptide directing secretion. The propeptide occupies 23 to 48 (EELEAESQLMEVGMPDTELAAVDEER). 3 cysteine pairs are disulfide-bonded: cysteine 52/cysteine 66, cysteine 56/cysteine 77, and cysteine 71/cysteine 82.

It belongs to the neurotoxin 12 (Hwtx-2) family. 02 (Hwtx-2) subfamily. In terms of tissue distribution, expressed by the venom gland.

The protein localises to the secreted. Functionally, postsynaptic neurotoxin. The protein is U4-theraphotoxin-Hhn1e of Cyriopagopus hainanus (Chinese bird spider).